A 407-amino-acid polypeptide reads, in one-letter code: Multifunctional CCA protein (407 aa).

ATP is bound by residues Gly-8 and Arg-11. 2 residues coordinate CTP: Gly-8 and Arg-11. Mg(2+) is bound by residues Asp-21 and Asp-23. Residues Arg-91, Arg-137, and Arg-140 each contribute to the ATP site. Residues Arg-91, Arg-137, and Arg-140 each contribute to the CTP site. An HD domain is found at 228–329; sequence TGIHTLLVAE…VKIFNKLDVW (102 aa).

It belongs to the tRNA nucleotidyltransferase/poly(A) polymerase family. Bacterial CCA-adding enzyme type 1 subfamily. Monomer. Can also form homodimers and oligomers. Requires Mg(2+) as cofactor. It depends on Ni(2+) as a cofactor.

It catalyses the reaction a tRNA precursor + 2 CTP + ATP = a tRNA with a 3' CCA end + 3 diphosphate. The enzyme catalyses a tRNA with a 3' CCA end + 2 CTP + ATP = a tRNA with a 3' CCACCA end + 3 diphosphate. Catalyzes the addition and repair of the essential 3'-terminal CCA sequence in tRNAs without using a nucleic acid template. Adds these three nucleotides in the order of C, C, and A to the tRNA nucleotide-73, using CTP and ATP as substrates and producing inorganic pyrophosphate. tRNA 3'-terminal CCA addition is required both for tRNA processing and repair. Also involved in tRNA surveillance by mediating tandem CCA addition to generate a CCACCA at the 3' terminus of unstable tRNAs. While stable tRNAs receive only 3'-terminal CCA, unstable tRNAs are marked with CCACCA and rapidly degraded. This chain is Multifunctional CCA protein, found in Vibrio vulnificus (strain CMCP6).